Reading from the N-terminus, the 183-residue chain is Guanylate kinase (183 aa).

The Guanylate kinase-like domain occupies 4–182 (GRVVVLTGPS…AITALEAAIF (179 aa)). 11-18 (GPSGVGKG) contributes to the ATP binding site.

This sequence belongs to the guanylate kinase family.

The protein localises to the cytoplasm. The catalysed reaction is GMP + ATP = GDP + ADP. It carries out the reaction dZMP + ATP = dZDP + ADP. The protein operates within purine metabolism. Functionally, essential for recycling GMP and indirectly, cGMP. In terms of biological role, (Microbial infection) Catalyzes the phosphorylation of dZMP to dZDP, when the bacterium is infected by a phage that produces the substrate for the synthesis of dZTP (2- amino-2'-deoxyadenosine 5'-triphosphate), which is then used by the phage as a DNA polymerase substrate. This Synechococcus elongatus (strain ATCC 33912 / PCC 7942 / FACHB-805) (Anacystis nidulans R2) protein is Guanylate kinase.